The chain runs to 644 residues: Alkyldihydroxyacetonephosphate synthase, peroxisomal (644 aa).

The N-terminal 44 residues, 1 to 44 (MAEAAGEAGASERDPDAVRARRRLRVLSGHLLGRPQEAPSTNEC), are a transit peptide targeting the peroxisome. The disordered stretch occupies residues 1 to 70 (MAEAAGEAGA…PAAPESGTIP (70 aa)). The segment covering 10-19 (ASERDPDAVR) has biased composition (basic and acidic residues). Residues 49-64 (AASAAGASPAASPAAP) are compositionally biased toward low complexity. Phosphoserine occurs at positions 51 and 56. Position 88 is an N6-acetyllysine (Lys88). Positions 188–370 (FERIPDIVVW…TEATIKIRPT (183 aa)) constitute an FAD-binding PCMH-type domain. FAD is bound by residues 220–226 (PIGGGTS), 289–295 (DSLEFSI), and 302–305 (TRAS). The residue at position 333 (Lys333) is an N6-acetyllysine. 354–360 (EGTLGVI) is a binding site for FAD. Substrate is bound at residue Arg501. The active-site Proton donor/acceptor is the Tyr564. Important for enzyme activity stretches follow at residues 601–603 (HHH) and 640–644 (NRNLL).

It belongs to the FAD-binding oxidoreductase/transferase type 4 family. Homodimer. The cofactor is FAD.

It localises to the peroxisome membrane. Its subcellular location is the peroxisome. The enzyme catalyses a long chain fatty alcohol + a 1-acylglycerone 3-phosphate = a 1-O-alkylglycerone 3-phosphate + a long-chain fatty acid + H(+). It carries out the reaction hexadecan-1-ol + 1-hexadecanoylglycerone 3-phosphate = 1-O-hexadecylglycerone 3-phosphate + hexadecanoate + H(+). The catalysed reaction is 1-hexadecanoylglycerone 3-phosphate + a long-chain fatty acid = a 1-acylglycerone 3-phosphate + hexadecanoate. The protein operates within glycerolipid metabolism; ether lipid biosynthesis. With respect to regulation, inhibited by divalent cation Mg(2+). Its function is as follows. Catalyzes the exchange of the acyl chain in acyl-dihydroxyacetonephosphate (acyl-DHAP) for a long chain fatty alcohol, yielding the first ether linked intermediate, i.e. alkyl-dihydroxyacetonephosphate (alkyl-DHAP), in the pathway of ether lipid biosynthesis. This Rattus norvegicus (Rat) protein is Alkyldihydroxyacetonephosphate synthase, peroxisomal (Agps).